Here is a 573-residue protein sequence, read N- to C-terminus: FAD-dependent monooxygenase resA (573 aa).

Residues 1–17 (MYDVIVIGAGWCGLVAA) form the signal peptide. I106 provides a ligand contact to FAD. N235 carries an N-linked (GlcNAc...) asparagine glycan.

It belongs to the FAD-binding monooxygenase family. The cofactor is FAD.

It functions in the pathway antifungal biosynthesis. Functionally, FAD-dependent monooxygenase; part of the gene cluster that mediates the biosynthesis of the tetrahydropyranyl antifungal agent restricticin that acts as an inhibitor of CYP51 and blocks the ergosterol biosynthesis. The highly reducing polyketide synthase resH, the short chain dehydrogenase resG, the cyclase resF, the FAD-dependent monooxygenase resA and the enoylreductase resD are required to generate the first stable intermediate desmethylrestrictinol. ResH with resD biosynthesize the first polyketide chain intermediate that is reduced by resG, followed by epoxidation by resA before 6-endo cyclization via epoxide opening by resF leads to desmethylrestrictinol. The methyltransferase resE then catalyzes the C4 O-methylation of desmethylrestrictinol to produce restrictinol, and the nonribosomal peptide synthetase resC catalyzes the C3 esterification of restrictinol with glycine that leads to restricticin. This chain is FAD-dependent monooxygenase resA, found in Aspergillus sclerotiorum.